A 237-amino-acid polypeptide reads, in one-letter code: 7-carboxy-7-deazaguanine synthase (237 aa).

Substrate-binding positions include 15–17 (LSG) and Arg30. The Radical SAM core domain maps to 21-233 (STGIPTIFVR…IQTHKYIWGD (213 aa)). Cys34, Cys38, and Cys48 together coordinate [4Fe-4S] cluster. Thr50 is a binding site for Mg(2+). Position 84 (Thr84) interacts with substrate. Gly86 contributes to the S-adenosyl-L-methionine binding site.

It belongs to the radical SAM superfamily. 7-carboxy-7-deazaguanine synthase family. As to quaternary structure, homodimer. It depends on [4Fe-4S] cluster as a cofactor. S-adenosyl-L-methionine serves as cofactor. Requires Mg(2+) as cofactor.

The enzyme catalyses 6-carboxy-5,6,7,8-tetrahydropterin + H(+) = 7-carboxy-7-deazaguanine + NH4(+). The protein operates within purine metabolism; 7-cyano-7-deazaguanine biosynthesis. Catalyzes the complex heterocyclic radical-mediated conversion of 6-carboxy-5,6,7,8-tetrahydropterin (CPH4) to 7-carboxy-7-deazaguanine (CDG), a step common to the biosynthetic pathways of all 7-deazapurine-containing compounds. The sequence is that of 7-carboxy-7-deazaguanine synthase from Leptospira interrogans serogroup Icterohaemorrhagiae serovar Lai (strain 56601).